A 241-amino-acid polypeptide reads, in one-letter code: Putative CRISPR-associated endoribonuclease-like protein Cas6 (241 aa).

It belongs to the CRISPR-associated protein Cas6/Cse3/CasE family. As to quaternary structure, binds crRNA.

Functionally, CRISPR (clustered regularly interspaced short palindromic repeat), is an adaptive immune system that provides protection against mobile genetic elements (viruses, transposable elements and conjugative plasmids). CRISPR clusters contain sequences complementary to antecedent mobile elements and target invading nucleic acids. CRISPR clusters are transcribed and processed into CRISPR RNA (crRNA), also called psiRNA (prokaryotic silencing) in this organism (Potential). This chain is Putative CRISPR-associated endoribonuclease-like protein Cas6 (cas6b), found in Pyrococcus furiosus (strain ATCC 43587 / DSM 3638 / JCM 8422 / Vc1).